Reading from the N-terminus, the 278-residue chain is Deoxyribonuclease-1-like 2 (278 aa).

A signal peptide spans 1–21 (MGWPWAPLTAVWALGVMGATA). Catalysis depends on residues Glu-99 and His-150. Residues Cys-189 and Cys-225 are joined by a disulfide bond.

The protein belongs to the DNase I family. Mg(2+) serves as cofactor. It depends on Ca(2+) as a cofactor.

It is found in the cytoplasm. It localises to the secreted. Functionally, divalent cation-dependent acid DNA endonuclease involved in the breakdown of the nucleus during corneocyte formation of epidermal keratinocytes. May play an immune role by eliminating harmful DNA released into the extracellular environment by damaged epidermal cells. The sequence is that of Deoxyribonuclease-1-like 2 (Dnase1l2) from Mus musculus (Mouse).